A 241-amino-acid polypeptide reads, in one-letter code: DNA repair protein RecO (241 aa).

This sequence belongs to the RecO family.

Involved in DNA repair and RecF pathway recombination. This chain is DNA repair protein RecO, found in Azobacteroides pseudotrichonymphae genomovar. CFP2.